Consider the following 491-residue polypeptide: Maintenance of mitochondrial morphology protein 1 (491 aa).

Residues M1 to G22 are Lumenal-facing. The chain crosses the membrane as a helical span at residues F23–F43. At G44–N491 the chain is on the cytoplasmic side. Disordered regions lie at residues P50–S95, P275–S325, and R392–N491. The segment covering L54–S64 has biased composition (basic residues). Composition is skewed to polar residues over residues N65–R78 and S85–S95. Positions Q131–P384 constitute an SMP-LTD domain. Residues P275–P287 show a composition bias toward pro residues. Composition is skewed to polar residues over residues T300 to E315 and T403 to A412. Over residues R422–R434 the composition is skewed to basic and acidic residues.

It belongs to the MMM1 family. As to quaternary structure, homodimer. Component of the ER-mitochondria encounter structure (ERMES) or MDM complex, composed of mmm1, mdm10, mdm12 and mdm34. A mmm1 homodimer associates with one molecule of mdm12 on each side in a pairwise head-to-tail manner, and the SMP-LTD domains of mmm1 and mdm12 generate a continuous hydrophobic tunnel for phospholipid trafficking.

Its subcellular location is the endoplasmic reticulum membrane. Its function is as follows. Component of the ERMES/MDM complex, which serves as a molecular tether to connect the endoplasmic reticulum (ER) and mitochondria. Components of this complex are involved in the control of mitochondrial shape and protein biogenesis, and function in nonvesicular lipid trafficking between the ER and mitochondria. The mdm12-mmm1 subcomplex functions in the major beta-barrel assembly pathway that is responsible for biogenesis of all outer membrane beta-barrel proteins, and acts in a late step after the SAM complex. The mdm10-mdm12-mmm1 subcomplex further acts in the TOM40-specific pathway after the action of the mdm12-mmm1 complex. Essential for establishing and maintaining the structure of mitochondria and maintenance of mtDNA nucleoids. The protein is Maintenance of mitochondrial morphology protein 1 of Aspergillus flavus (strain ATCC 200026 / FGSC A1120 / IAM 13836 / NRRL 3357 / JCM 12722 / SRRC 167).